Reading from the N-terminus, the 460-residue chain is Chromosomal replication initiator protein DnaA (460 aa).

Positions 1-84 are domain I, interacts with DnaA modulators; the sequence is MAVSLWQQCI…RFDIGSRPSA (84 aa). The domain II stretch occupies residues 84–123; that stretch reads AKKPEPAPVAAVRVPNPQTKASVGTSFNTTEPVANTNHRS. The tract at residues 103 to 123 is disordered; the sequence is KASVGTSFNTTEPVANTNHRS. Residues 124 to 340 form a domain III, AAA+ region region; the sequence is NINPTYQFDN…GALNRVIANA (217 aa). ATP contacts are provided by Gly-168, Gly-170, Lys-171, and Thr-172. The tract at residues 341-460 is domain IV, binds dsDNA; sequence NFTGRPITID…YANLIRTLSS (120 aa).

The protein belongs to the DnaA family. As to quaternary structure, oligomerizes as a right-handed, spiral filament on DNA at oriC.

The protein localises to the cytoplasm. In terms of biological role, plays an essential role in the initiation and regulation of chromosomal replication. ATP-DnaA binds to the origin of replication (oriC) to initiate formation of the DNA replication initiation complex once per cell cycle. Binds the DnaA box (a 9 base pair repeat at the origin) and separates the double-stranded (ds)DNA. Forms a right-handed helical filament on oriC DNA; dsDNA binds to the exterior of the filament while single-stranded (ss)DNA is stabiized in the filament's interior. The ATP-DnaA-oriC complex binds and stabilizes one strand of the AT-rich DNA unwinding element (DUE), permitting loading of DNA polymerase. After initiation quickly degrades to an ADP-DnaA complex that is not apt for DNA replication. Binds acidic phospholipids. This Shewanella sp. (strain MR-4) protein is Chromosomal replication initiator protein DnaA.